Here is a 136-residue protein sequence, read N- to C-terminus: Large ribosomal subunit protein uL16 (136 aa).

It belongs to the universal ribosomal protein uL16 family. In terms of assembly, part of the 50S ribosomal subunit.

Binds 23S rRNA and is also seen to make contacts with the A and possibly P site tRNAs. This chain is Large ribosomal subunit protein uL16, found in Citrobacter koseri (strain ATCC BAA-895 / CDC 4225-83 / SGSC4696).